The chain runs to 100 residues: MDLTPREKDKLLIFTAGLVAERRLARGVKLNYPEAMAYISAALLEGARDGQTVAELMHYGTTLLTREQVMEGIPEMIPEIQVEATFPDGTKLVTVHQPIV.

This sequence belongs to the urease gamma subunit family. As to quaternary structure, heterotrimer of UreA (gamma), UreB (beta) and UreC (alpha) subunits. Three heterotrimers associate to form the active enzyme.

It localises to the cytoplasm. It catalyses the reaction urea + 2 H2O + H(+) = hydrogencarbonate + 2 NH4(+). It participates in nitrogen metabolism; urea degradation; CO(2) and NH(3) from urea (urease route): step 1/1. The sequence is that of Urease subunit gamma from Pseudomonas fluorescens (strain Pf0-1).